We begin with the raw amino-acid sequence, 302 residues long: Sulfate adenylyltransferase subunit 2 (302 aa).

The tract at residues 280–302 (RQGRVIDHDQAGSMEQKKREGYF) is disordered.

It belongs to the PAPS reductase family. CysD subfamily. In terms of assembly, heterodimer composed of CysD, the smaller subunit, and CysN.

It carries out the reaction sulfate + ATP + H(+) = adenosine 5'-phosphosulfate + diphosphate. It functions in the pathway sulfur metabolism; hydrogen sulfide biosynthesis; sulfite from sulfate: step 1/3. Functionally, with CysN forms the ATP sulfurylase (ATPS) that catalyzes the adenylation of sulfate producing adenosine 5'-phosphosulfate (APS) and diphosphate, the first enzymatic step in sulfur assimilation pathway. APS synthesis involves the formation of a high-energy phosphoric-sulfuric acid anhydride bond driven by GTP hydrolysis by CysN coupled to ATP hydrolysis by CysD. The protein is Sulfate adenylyltransferase subunit 2 of Hahella chejuensis (strain KCTC 2396).